The chain runs to 441 residues: Polycomb protein EED (441 aa).

Residues 1-72 are disordered; the sequence is MSEREVSTVP…PGRKSWGKGK (72 aa). Position 2 is an N-acetylserine (Ser-2). Ser-2 and Ser-34 each carry phosphoserine. Polar residues predominate over residues 45 to 61; it reads ESGTNTERPDTPTNTPN. Position 55 is a phosphothreonine (Thr-55). N6,N6,N6-trimethyllysine; alternate is present on Lys-66. Position 66 is an N6,N6-dimethyllysine; alternate (Lys-66). The residue at position 66 (Lys-66) is an N6-methyllysine; alternate. Residues 81–441 form an interaction with EZH2 region; the sequence is SFKCVNSLKE…ASIWRWDRLR (361 aa). WD repeat units lie at residues 91–134, 142–185, 188–228, and 234–275; these read DHNQ…EIRL, DADE…CIKH, GHGN…LVAI, and GHRD…NAIK. Residues Lys-197, Lys-268, and Lys-284 each carry the N6,N6,N6-trimethyllysine; alternate modification. N6,N6-dimethyllysine; alternate occurs at positions 197, 268, and 284. Residues Lys-197, Lys-268, and Lys-284 each carry the N6-methyllysine; alternate modification. WD repeat units lie at residues 304–341, 359–399, and 408–441; these read IHRN…DDID, SQCD…PHKA, and KCGA…DRLR.

Belongs to the WD repeat ESC family. In terms of assembly, component of the PRC2/EED-EZH2 complex, which includes EED, EZH2, SUZ12, RBBP4 and RBBP7 and possibly AEBP2. The minimum components required for methyltransferase activity of the PRC2/EED-EZH2 complex are EED, EZH2 and SUZ12. Component of the PRC2/EED-EZH1 complex, which includes EED, EZH1, SUZ12, RBBP4 and AEBP2. The PRC2 complex may also interact with DNMT1, DNMT3A, DNMT3B and PHF1 via the EZH2 subunit and with SIRT1 via the SUZ12 subunit. Interacts with HDAC, HDAC2, histone H1, KMT2A/MLL1 and YY1. May interact with ITGA4, ITGAE and ITGB7. Interacts with CDYL. Interacts with BMAL1. Post-translationally, methylated. Binding to histone H1 'Lys-26' promotes mono-, di-, and trimethylation of internal lysines.

Its subcellular location is the nucleus. Functionally, polycomb group (PcG) protein. Component of the PRC2/EED-EZH2 complex, which methylates 'Lys-9' and 'Lys-27' of histone H3, leading to transcriptional repression of the affected target gene. Also recognizes 'Lys-26' trimethylated histone H1 with the effect of inhibiting PRC2 complex methyltransferase activity on nucleosomal histone H3 'Lys-27', whereas H3 'Lys-27' recognition has the opposite effect, enabling the propagation of this repressive mark. The PRC2/EED-EZH2 complex may also serve as a recruiting platform for DNA methyltransferases, thereby linking two epigenetic repression systems. This chain is Polycomb protein EED (EED), found in Bos taurus (Bovine).